The sequence spans 150 residues: Large ribosomal subunit protein bL9 (150 aa).

This sequence belongs to the bacterial ribosomal protein bL9 family.

In terms of biological role, binds to the 23S rRNA. The sequence is that of Large ribosomal subunit protein bL9 from Buchnera aphidicola subsp. Acyrthosiphon pisum (strain 5A).